Reading from the N-terminus, the 398-residue chain is Probable peptidoglycan glycosyltransferase FtsW (398 aa).

Over 1–20 the chain is Cytoplasmic; sequence MSTQAIRGARGLVLKWGAGR. Residues 21 to 41 traverse the membrane as a helical segment; the sequence is FYLDTVLLSVSLGLMLFGFVM. At 42 to 57 the chain is on the periplasmic side; it reads VSSASLHLGEKMASDS. The chain crosses the membrane as a helical span at residues 58–78; the sequence is FYFPKHQLVHILLGLAAGWGA. Over 79–92 the chain is Cytoplasmic; it reads ARVRLDTLERHSRS. A helical membrane pass occupies residues 93-113; sequence LFWAGIALLVLVLIPGVGKSV. The Periplasmic portion of the chain corresponds to 114–121; the sequence is NGSVRWIN. Residues 122–142 form a helical membrane-spanning segment; that stretch reads LFGLRVQVSEVFKLVAAIYVA. At 143 to 153 the chain is on the cytoplasmic side; sequence GYISRHLDTVR. A helical membrane pass occupies residues 154–174; it reads TSVKGMIFPLSLLAIGAVLLL. Residues 175 to 177 lie on the Periplasmic side of the membrane; the sequence is KEP. Residues 178 to 198 traverse the membrane as a helical segment; it reads DFGATAVVMATALGMLFLAGA. A topological domain (cytoplasmic) is located at residue Arg-199. A helical transmembrane segment spans residues 200–220; the sequence is LWVFVGLLGLVAVAGTVLIYT. Residues 221–289 are Periplasmic-facing; that stretch reads AEYRLRRVLS…LFSVIGEELG (69 aa). A helical transmembrane segment spans residues 290 to 310; it reads LWGATTVILLFAIVVWRALAI. Residues 311-318 lie on the Cytoplasmic side of the membrane; sequence GRLAERSG. Residues 319–339 form a helical membrane-spanning segment; that stretch reads NLFAAFLAYGIGIWLGLQSFI. The Periplasmic portion of the chain corresponds to 340–355; sequence NMGVNMGMLPTKGLTL. The chain crosses the membrane as a helical span at residues 356-376; the sequence is PLMSYGGGSMMVVCAAIGLLF. At 377-398 the chain is on the cytoplasmic side; sequence RIRSEAVASFLGNGRKGLWPGV.

This sequence belongs to the SEDS family. FtsW subfamily.

Its subcellular location is the cell inner membrane. It carries out the reaction [GlcNAc-(1-&gt;4)-Mur2Ac(oyl-L-Ala-gamma-D-Glu-L-Lys-D-Ala-D-Ala)](n)-di-trans,octa-cis-undecaprenyl diphosphate + beta-D-GlcNAc-(1-&gt;4)-Mur2Ac(oyl-L-Ala-gamma-D-Glu-L-Lys-D-Ala-D-Ala)-di-trans,octa-cis-undecaprenyl diphosphate = [GlcNAc-(1-&gt;4)-Mur2Ac(oyl-L-Ala-gamma-D-Glu-L-Lys-D-Ala-D-Ala)](n+1)-di-trans,octa-cis-undecaprenyl diphosphate + di-trans,octa-cis-undecaprenyl diphosphate + H(+). The protein operates within cell wall biogenesis; peptidoglycan biosynthesis. In terms of biological role, peptidoglycan polymerase that is essential for cell division. The protein is Probable peptidoglycan glycosyltransferase FtsW of Methylococcus capsulatus (strain ATCC 33009 / NCIMB 11132 / Bath).